We begin with the raw amino-acid sequence, 156 residues long: Small ribosomal subunit protein uS7 (156 aa).

Belongs to the universal ribosomal protein uS7 family. As to quaternary structure, part of the 30S ribosomal subunit. Contacts proteins S9 and S11.

Its function is as follows. One of the primary rRNA binding proteins, it binds directly to 16S rRNA where it nucleates assembly of the head domain of the 30S subunit. Is located at the subunit interface close to the decoding center, probably blocks exit of the E-site tRNA. The chain is Small ribosomal subunit protein uS7 from Shigella dysenteriae serotype 1 (strain Sd197).